A 402-amino-acid polypeptide reads, in one-letter code: Propionate kinase (402 aa).

Residues N11 and K18 each contribute to the ATP site. A Mg(2+)-binding site is contributed by N11. Substrate is bound at residue R86. Catalysis depends on D143, which acts as the Proton donor/acceptor. ATP contacts are provided by residues H175, 203-207 (HLGNG), 278-280 (DLR), and 326-330 (GIGEN).

The protein belongs to the acetokinase family. TdcD subfamily. Homodimer. Mg(2+) serves as cofactor.

It catalyses the reaction propanoate + ATP = propanoyl phosphate + ADP. The protein operates within amino-acid degradation; L-threonine degradation via propanoate pathway; propanoate from L-threonine: step 4/4. In terms of biological role, catalyzes the conversion of propionyl phosphate and ADP to propionate and ATP. This chain is Propionate kinase, found in Citrobacter koseri (strain ATCC BAA-895 / CDC 4225-83 / SGSC4696).